We begin with the raw amino-acid sequence, 351 residues long: Dihydroorotate dehydrogenase (quinone) (351 aa).

FMN-binding positions include 67–71 and T91; that span reads AGFDK. K71 is a binding site for substrate. 116–120 is a binding site for substrate; sequence NAMGF. The FMN site is built by N145 and N178. Residue N178 participates in substrate binding. S181 (nucleophile) is an active-site residue. N183 contributes to the substrate binding site. FMN contacts are provided by K214 and T242. Residue 243–244 coordinates substrate; sequence NT. Residues G262, G291, and 312–313 contribute to the FMN site; that span reads YT.

This sequence belongs to the dihydroorotate dehydrogenase family. Type 2 subfamily. Monomer. Requires FMN as cofactor.

It is found in the cell membrane. The catalysed reaction is (S)-dihydroorotate + a quinone = orotate + a quinol. It participates in pyrimidine metabolism; UMP biosynthesis via de novo pathway; orotate from (S)-dihydroorotate (quinone route): step 1/1. In terms of biological role, catalyzes the conversion of dihydroorotate to orotate with quinone as electron acceptor. In Nitratiruptor sp. (strain SB155-2), this protein is Dihydroorotate dehydrogenase (quinone).